Reading from the N-terminus, the 499-residue chain is NADH-quinone oxidoreductase subunit N (499 aa).

14 consecutive transmembrane segments (helical) span residues 16-36 (AAFSMSVVGGVGLAMIVLDAF), 42-62 (AIPWLGVAALGVSAVWEITHL), 77-97 (GGFVAFINLIILLTGLATILL), 109-129 (YGEVYALIMFCTVGMIMLGSA), 133-153 (VSIFLGLETMSVCLYVLTGFI), 167-187 (FLLGAFSTGFFLYGIALMYGA), 208-228 (LLFWGGFALFLVGFFFKVSAA), 252-272 (ATKAAAFAALILVLVHAVPGG), 274-294 (WQLSVAAVAVLTMVIGNVMAL), 302-322 (LLAYSSIAHAGYLLVGLSAGT), 327-347 (AGALFYLLVYAVMNIGAFGVM), 376-396 (GSTMGVFMLSLIGFPPLGGFI), 411-433 (TWLVVIGVLMSALSAYYYLRVVY), and 463-483 (GTLVVCAVALVVLGVFFGGVL).

This sequence belongs to the complex I subunit 2 family. In terms of assembly, NDH-1 is composed of 14 different subunits. Subunits NuoA, H, J, K, L, M, N constitute the membrane sector of the complex.

The protein resides in the cell inner membrane. It carries out the reaction a quinone + NADH + 5 H(+)(in) = a quinol + NAD(+) + 4 H(+)(out). Its function is as follows. NDH-1 shuttles electrons from NADH, via FMN and iron-sulfur (Fe-S) centers, to quinones in the respiratory chain. The immediate electron acceptor for the enzyme in this species is believed to be a menaquinone. Couples the redox reaction to proton translocation (for every two electrons transferred, four hydrogen ions are translocated across the cytoplasmic membrane), and thus conserves the redox energy in a proton gradient. The polypeptide is NADH-quinone oxidoreductase subunit N (Salinibacter ruber (strain DSM 13855 / M31)).